Reading from the N-terminus, the 89-residue chain is LYR motif-containing protein 4 (89 aa).

A coiled-coil region spans residues 44-71; it reads KNIADSEKIEELLNKAKANLEVIQRQGT.

Belongs to the complex I LYR family.

The protein localises to the mitochondrion. The protein resides in the nucleus. It functions in the pathway cofactor biosynthesis; iron-sulfur cluster biosynthesis. Its function is as follows. Required for nuclear and mitochondrial iron-sulfur protein biosynthesis. This Taeniopygia guttata (Zebra finch) protein is LYR motif-containing protein 4 (LYRM4).